The following is a 1485-amino-acid chain: DNA topoisomerase 2 (1485 aa).

The segment covering 1–16 (MSIDADFSDYEDEASG) has biased composition (acidic residues). A disordered region spans residues 1-76 (MSIDADFSDY…NGNGNSNVST (76 aa)). The span at 46–59 (DLRQTSLTSMTASE) shows a compositional bias: polar residues. Residues 64-76 (VTNNGNGNSNVST) show a composition bias toward low complexity. ATP contacts are provided by residues Asn-136, Asn-165, 193–195 (SSN), and 206–213 (GRNGYGAK). The segment at 388–392 (KKENK) is interaction with DNA. An ATP-binding site is contributed by 421–423 (QTK). The Toprim domain maps to 499-613 (CVLILTEGDS…SLLQIPGFLI (115 aa)). Residues Glu-505, Asp-582, and Asp-584 each coordinate Mg(2+). The 451-residue stretch at 745-1195 (IPSVVDGLKP…TPKELWLHDL (451 aa)) folds into the Topo IIA-type catalytic domain. Tyr-835 functions as the O-(5'-phospho-DNA)-tyrosine intermediate in the catalytic mechanism. Residues 1019 to 1028 (KLSRTQATSN) form an interaction with DNA region. A compositionally biased stretch (basic and acidic residues) spans 1216 to 1225 (EEQSSRDFVN). The tract at residues 1216 to 1485 (EEQSSRDFVN…EDVDDYDESD (270 aa)) is disordered. Basic residues predominate over residues 1226–1242 (RTKKKPRGKSTGTRKPR). The segment covering 1260–1273 (ESKPSTTNRKQQTL) has biased composition (polar residues). The span at 1278 to 1307 (ASKEPEKSSDINIVKTEDNSHGLSVEENRI) shows a compositional bias: basic and acidic residues. Phosphoserine is present on residues Ser-1310 and Ser-1345. Positions 1387–1396 (AKNKGKKASS) are enriched in basic residues. Residues 1413 to 1425 (GSSSTPKASSTNA) are compositionally biased toward polar residues. Ser-1433 carries the post-translational modification Phosphoserine. The span at 1473-1485 (DNDEDVDDYDESD) shows a compositional bias: acidic residues.

The protein belongs to the type II topoisomerase family. In terms of assembly, homodimer. Mg(2+) is required as a cofactor. It depends on Mn(2+) as a cofactor. Ca(2+) serves as cofactor. In terms of processing, phosphorylated at multiple sites at both extremities of the protein.

It localises to the nucleus. It carries out the reaction ATP-dependent breakage, passage and rejoining of double-stranded DNA.. Functionally, control of topological states of DNA by transient breakage and subsequent rejoining of DNA strands. Topoisomerase II makes double-strand breaks. This Schizosaccharomyces pombe (strain 972 / ATCC 24843) (Fission yeast) protein is DNA topoisomerase 2 (top2).